The sequence spans 421 residues: Testin (421 aa).

The region spanning 92–199 is the PET domain; that stretch reads MILTNPVAAK…GDVKLPREMD (108 aa). The tract at residues 133 to 164 is disordered; sequence EKQPVAGSEGAQYRKKQLAKQLPAHDQDPSKC. Residues 155–164 are compositionally biased toward basic and acidic residues; the sequence is PAHDQDPSKC. 3 LIM zinc-binding domains span residues 234–297, 299–359, and 362–421; these read YSCY…CDSE, PRCA…NHAV, and QGCH…KMMS.

Belongs to the prickle / espinas / testin family. In terms of assembly, interacts via LIM domain 1 with ZYX. Interacts (via LIM domain 3) with ENAH and VASP. Interacts with ALKBH4, talin, actin, alpha-actinin, GRIP1 and PXN. Interacts (via LIM domain 2) with ACTL7A (via N-terminus). Heterodimer with ACTL7A; the heterodimer interacts with ENAH to form a heterotrimer.

It is found in the cytoplasm. It localises to the cell junction. The protein resides in the focal adhesion. Functionally, scaffold protein that may play a role in cell adhesion, cell spreading and in the reorganization of the actin cytoskeleton. Plays a role in the regulation of cell proliferation. May act as a tumor suppressor. This is Testin (TES) from Mustela putorius furo (European domestic ferret).